The primary structure comprises 302 residues: tRNA pseudouridine synthase B (302 aa).

The Nucleophile role is filled by Asp-43.

The protein belongs to the pseudouridine synthase TruB family. Type 1 subfamily.

The catalysed reaction is uridine(55) in tRNA = pseudouridine(55) in tRNA. In terms of biological role, responsible for synthesis of pseudouridine from uracil-55 in the psi GC loop of transfer RNAs. The polypeptide is tRNA pseudouridine synthase B (Burkholderia mallei (strain NCTC 10247)).